We begin with the raw amino-acid sequence, 71 residues long: Small ribosomal subunit protein eS17 (71 aa).

It belongs to the eukaryotic ribosomal protein eS17 family.

The protein is Small ribosomal subunit protein eS17 of Pyrobaculum neutrophilum (strain DSM 2338 / JCM 9278 / NBRC 100436 / V24Sta) (Thermoproteus neutrophilus).